We begin with the raw amino-acid sequence, 559 residues long: N-acetylglucosamine-6-sulfatase (559 aa).

The tract at residues 1–26 (MRFLSLAPDRPRRGGPRHLPSGSPAP) is disordered. Residues 1–47 (MRFLSLAPDRPRRGGPRHLPSGSPAPPPPPPLLLLLLLGGCLGVSGA) form the signal peptide. 3 residues coordinate Ca(2+): Asp62, Asp63, and Cys98. The active-site Nucleophile is Cys98. Position 98 is a 3-oxoalanine (Cys) (Cys98). N-linked (GlcNAc...) asparagine glycosylation is found at Asn118, Asn124, Asn190, Asn205, Asn217, Asn286, and Asn324. The Ca(2+) site is built by Asp333 and Asn334. N-linked (GlcNAc...) asparagine glycosylation is found at Asn369, Asn394, Asn412, Asn429, Asn456, and Asn487. Position 548 is a phosphoserine (Ser548).

The protein belongs to the sulfatase family. The cofactor is Ca(2+). In terms of processing, processed by internal peptidase. Post-translationally, the conversion to 3-oxoalanine (also known as C-formylglycine, FGly), of a serine or cysteine residue in prokaryotes and of a cysteine residue in eukaryotes, is critical for catalytic activity.

The protein resides in the lysosome. The enzyme catalyses Hydrolysis of the 6-sulfate groups of the N-acetyl-D-glucosamine 6-sulfate units of heparan sulfate and keratan sulfate.. Hydrolyzes 6-sulfate groups in N-acetyl-d-glucosaminide units of heparin sulfate and keratan sulfate. This is N-acetylglucosamine-6-sulfatase (GNS) from Capra hircus (Goat).